The chain runs to 207 residues: Serotonin N-acetyltransferase (207 aa).

T31 is modified (phosphothreonine; by PKA). Residues N35 to R196 enclose the N-acetyltransferase domain. L124 is a substrate binding site. Residues L124–V126 and Q132–S137 each bind acetyl-CoA. M159 is a substrate binding site. Residue Y168 to R170 coordinates acetyl-CoA. Position 205 is a phosphoserine (S205).

The protein belongs to the acetyltransferase family. AANAT subfamily. In terms of assembly, monomer. Interacts with several 14-3-3 proteins, including YWHAB, YWHAE, YWHAG and YWHAZ, preferentially when phosphorylated at Thr-31. Phosphorylation on Ser-205 also allows binding to YWHAZ, but with lower affinity. The interaction with YWHAZ considerably increases affinity for arylalkylamines and acetyl-CoA and protects the enzyme from dephosphorylation and proteasomal degradation. It may also prevent thiol-dependent inactivation. Post-translationally, cAMP-dependent phosphorylation on both N-terminal Thr-31 and C-terminal Ser-205 regulates AANAT activity by promoting interaction with 14-3-3 proteins. High levels in pineal gland and retina.

It localises to the cytoplasm. It catalyses the reaction a 2-arylethylamine + acetyl-CoA = an N-acetyl-2-arylethylamine + CoA + H(+). Its pathway is aromatic compound metabolism; melatonin biosynthesis; melatonin from serotonin: step 1/2. Its function is as follows. Controls the night/day rhythm of melatonin production in the pineal gland. Catalyzes the N-acetylation of serotonin into N-acetylserotonin, the penultimate step in the synthesis of melatonin. The protein is Serotonin N-acetyltransferase (AANAT) of Bos taurus (Bovine).